The following is a 341-amino-acid chain: Major histocompatibility complex class I-related protein 1 (341 aa).

Positions 1-22 (MGELMAFLLPLIIVLMVKHSDS) are cleaved as a signal peptide. Positions 23 to 109 (RTHSLRYFRL…KRLQRHYNHS (87 aa)) are alpha-1. An antigen-binding cleft region spans residues 23–201 (RTHSLRYFRL…EYGKDILQRT (179 aa)). Over 23–302 (RTHSLRYFRL…QESETIPLVM (280 aa)) the chain is Extracellular. Y29 and R31 together coordinate 8-(9H-purin-6-yl)-2-oxa-8-azabicyclo[3.3.1]nona-3,6-diene-4,6-dicarbaldehyde. Positions 31, 46, and 65 each coordinate 5-(2-oxoethylideneamino)-6-(D-ribitylamino)uracil. Positions 31, 46, and 65 each coordinate 5-(2-oxopropylideneamino)-6-(D-ribitylamino)uracil. Residues R31, S46, and K65 each contribute to the 7-hydroxy-6-methyl-8-(1-D-ribityl)lumazine site. Residues K65 and H80 each coordinate 8-(9H-purin-6-yl)-2-oxa-8-azabicyclo[3.3.1]nona-3,6-diene-4,6-dicarbaldehyde. A 2-amino-4-oxopteridine-6-carbaldehyde-binding site is contributed by K65. K65 contacts pyridoxal. N-linked (GlcNAc...) asparagine glycosylation occurs at N107. Positions 110–201 (GSHTYQRMIG…EYGKDILQRT (92 aa)) are alpha-2. R116 lines the 8-(9H-purin-6-yl)-2-oxa-8-azabicyclo[3.3.1]nona-3,6-diene-4,6-dicarbaldehyde pocket. 5-(2-oxoethylideneamino)-6-(D-ribitylamino)uracil-binding residues include R116, Y174, and Q175. Positions 116, 174, and 175 each coordinate 5-(2-oxopropylideneamino)-6-(D-ribitylamino)uracil. 7-hydroxy-6-methyl-8-(1-D-ribityl)lumazine contacts are provided by R116, Y174, and Q175. 2 disulfides stabilise this stretch: C120–C183 and C222–C278. Positions 202–293 (EPPLVRVNRK…GVHMVLQVPQ (92 aa)) are alpha-3. The Ig-like C1-type domain occupies 203–299 (PPLVRVNRKE…QVPQESETIP (97 aa)). Residues 294–302 (ESETIPLVM) form a connecting peptide region. The helical transmembrane segment at 303 to 323 (KAVSGSIVLVIVLAGVGVLVW) threads the bilayer. Over 324 to 341 (RRRPREQNGAIYLPTPDR) the chain is Cytoplasmic.

Belongs to the MHC class I family. In terms of assembly, heterotrimer that consists of MR1, B2M and metabolite antigen. Major classes of metabolite ligands presented by MR1 include riboflavin-related antigens, pyrimidines and ribityl lumazines, nucleobase adducts and folate derivatives. Forms reversible covalent Schiff base complexes with microbial pyrimidine-based metabolite, which serves as a molecular switch triggering complete folding, stable association with B2M and translocation of the ternary complex from endoplasmic reticulum to the plasma membrane. Alternatively, forms non-Schiff base complexes with ribityl lumazines. On antigen-presenting cells, the ternary complex interacts with TCR on MR1-restricted T cells. Interacts with TAPBP and TAPBPL chaperones in the endoplasmic reticulum. TAPBP associated or not with MHC class I peptide loading complex binds ligand-free MR1 or MR1-B2M complex, providing for stable MR1 pools ready for metabolite antigen processing. TAPBPL interacts with MR1 in a ligand-independent way; this interaction may stabilize MR1 pool and facilitate ligand loading and dissociation. Structurally, MR1-B2M heterodimer adopts a topology similar to classical MHC class I molecules, with alpha-1 and alpha-2 domains of MR1 forming the antigen-binding cleft composed of two alpha-helices resting on a floor of 7-stranded anti-parallel beta-pleated sheet. MR1-B2M heterodimer (via alpha-helices) interacts with TCR (via CDR domains). In terms of processing, N-glycosylated.

It is found in the cell membrane. The protein resides in the endoplasmic reticulum membrane. The protein localises to the golgi apparatus membrane. Its subcellular location is the early endosome membrane. It localises to the late endosome membrane. Its function is as follows. Antigen-presenting molecule specialized in displaying microbial pyrimidine-based metabolites to alpha-beta T cell receptors (TCR) on innate-type mucosal-associated invariant T (MAIT) cells. In complex with B2M preferentially presents riboflavin-derived metabolites to semi-invariant TCRs on MAIT cells, guiding immune surveillance of the microbial metabolome at mucosal epithelial barriers. Signature pyrimidine-based microbial antigens are generated via non-enzymatic condensation of metabolite intermediates of the riboflavin pathway with by-products arising from other metabolic pathways such as glycolysis. Typical potent antigenic metabolites are 5-(2-oxoethylideneamino)-6-D-ribitylaminouracil (5-OE-RU) and 5-(2-oxopropylideneamino)-6-D-ribitylaminouracil (5-OP-RU), products of condensation of 5-amino-6-D-ribityaminouracil (5-A-RU) with glyoxal or methylglyoxal by-products, respectively. May present microbial antigens to various MAIT cell subsets, providing for unique recognition of diverse microbes, including pathogens that do not synthesize riboflavin. Upon antigen recognition, elicits rapid innate-type MAIT cell activation to eliminate pathogenic microbes by directly killing infected cells. During T cell development, drives thymic selection and post-thymic terminal differentiation of MAIT cells in a process dependent on commensal microflora. Acts as an immune sensor of cancer cell metabolome. May present a tumor-specific or -associated metabolite essential for cancer cell survival to a pan-cancer TCR on a non-MAIT CD8-positive T cell clone, triggering T cell-mediated killing of a wide range of cancer cell types. May present tumor-enriched pyridoxal and pyridoxal 5'-phosphate antigens, enabling preferential recognition of cancer cells. Presents nucleobase carbonyl adducts generated during oxidative stress. Captures M3Ade, a nucleobase adduct composed of one adenine modified by a malondialdehyde trimer, for recognition by MR1-restricted T cell clones expressing a polyclonal TCR repertoire. This Pan troglodytes (Chimpanzee) protein is Major histocompatibility complex class I-related protein 1.